Consider the following 342-residue polypeptide: Renalase (342 aa).

The first 17 residues, 1 to 17 (MAQVLIVGAGMTGSLCA), serve as a signal peptide directing secretion. Residues T12, R42, and 61–62 (QY) each bind FAD.

The protein belongs to the renalase family. FAD is required as a cofactor. In terms of tissue distribution, secreted into the blood by the kidney. Highly expressed in the kidney, expressed at lower level in heart, skeletal muscle and small intestine. Its plasma concentration is markedly reduced in patients with end-stage renal disease, as compared with healthy subjects.

The protein localises to the secreted. The catalysed reaction is 1,2-dihydro-beta-NAD + O2 + H(+) = H2O2 + NAD(+). The enzyme catalyses 1,2-dihydro-beta-NADP + O2 + H(+) = H2O2 + NADP(+). It carries out the reaction 1,6-dihydro-beta-NADP + O2 + H(+) = H2O2 + NADP(+). It catalyses the reaction 1,6-dihydro-beta-NAD + O2 + H(+) = H2O2 + NAD(+). Its function is as follows. Catalyzes the oxidation of the less abundant 1,2-dihydro-beta-NAD(P) and 1,6-dihydro-beta-NAD(P) to form beta-NAD(P)(+). The enzyme hormone is secreted by the kidney, and circulates in blood and modulates cardiac function and systemic blood pressure. Lowers blood pressure in vivo by decreasing cardiac contractility and heart rate and preventing a compensatory increase in peripheral vascular tone, suggesting a causal link to the increased plasma catecholamine and heightened cardiovascular risk. High concentrations of catecholamines activate plasma renalase and promotes its secretion and synthesis. The protein is Renalase (RNLS) of Homo sapiens (Human).